Reading from the N-terminus, the 226-residue chain is Phosphate propanoyltransferase (226 aa).

CoA is bound at residue 44 to 46 (VSN). Zn(2+) contacts are provided by H48 and H50. Residues M72, K90, and R97 each contribute to the CoA site. R103 contributes to the phosphate binding site. E109 is a Zn(2+) binding site. F116 provides a ligand contact to CoA. Positions 157, 159, and 204 each coordinate Zn(2+). A CoA-binding site is contributed by N211.

It belongs to the PduL family. Full-length protein forms large oligomers. Homodimer, when purified in the absence of the encapsulation peptide (EP, residues 1-47). The EP may influence oligomerization. Zn(2+) serves as cofactor.

The protein resides in the bacterial microcompartment. The enzyme catalyses propanoyl-CoA + phosphate = propanoyl phosphate + CoA. It participates in polyol metabolism; 1,2-propanediol degradation. In terms of biological role, involved in 1,2-propanediol (1,2-PD) utilization within the bacterial microcompartment (BMC) dedicated to 1,2-PD degradation by catalyzing the conversion of propanoyl-CoA to propanoyl-phosphate. CoA is regenerated within the pdu BMC (for use by PduP) via this enzyme, although there must also be cofactor transport across the BMC. Directly targeted to the BMC. Phosphate is probably the first substrate to bind in the forward direction. CoA is probably the first substrate to bind in the reverse direction, and might bind to the enzyme as the BMC assembles, ensuring cofactor encapsulation. The sequence is that of Phosphate propanoyltransferase from Rhodopseudomonas palustris (strain BisB18).